We begin with the raw amino-acid sequence, 761 residues long: BMP/retinoic acid-inducible neural-specific protein 1 (761 aa).

The N-terminal stretch at 1 to 19 is a signal peptide; the sequence is MNWRFVELLYFLFIWGRIS. The 184-residue stretch at 68 to 251 folds into the MACPF domain; sequence RYKIYREFAR…FVQSALSYIM (184 aa). Residues Asn-156, Asn-433, Asn-443, Asn-553, Asn-599, Asn-631, and Asn-677 are each glycosylated (N-linked (GlcNAc...) asparagine).

Belongs to the BRINP family. In terms of tissue distribution, highly expressed in brain. Weakly expressed in heart, lung, skeletal muscle, kidney, thymus, prostate, testis and small intestine.

Its subcellular location is the cytoplasm. Plays a role in neurogenesis and brain development. May suppress cell cycle progression in postmitotic neurons by inhibiting G1/S transition. This is BMP/retinoic acid-inducible neural-specific protein 1 (BRINP1) from Homo sapiens (Human).